Here is a 159-residue protein sequence, read N- to C-terminus: Small ribosomal subunit protein uS17 (159 aa).

The protein belongs to the universal ribosomal protein uS17 family.

It localises to the cytoplasm. This Zea mays (Maize) protein is Small ribosomal subunit protein uS17 (RPS11).